We begin with the raw amino-acid sequence, 155 residues long: Large ribosomal subunit protein uL22c (155 aa).

The protein belongs to the universal ribosomal protein uL22 family. In terms of assembly, part of the 50S ribosomal subunit.

The protein resides in the plastid. Its subcellular location is the chloroplast. This protein binds specifically to 23S rRNA. Functionally, the globular domain of the protein is located near the polypeptide exit tunnel on the outside of the subunit, while an extended beta-hairpin is found that lines the wall of the exit tunnel in the center of the 70S ribosome. This is Large ribosomal subunit protein uL22c (rpl22) from Nicotiana sylvestris (Wood tobacco).